Here is a 234-residue protein sequence, read N- to C-terminus: Cyclo(L-leucyl-L-leucyl) synthase (234 aa).

The active-site Nucleophile is Ser28. Substrate is bound by residues 171-175 (YVLAE), Tyr195, and 200-201 (EL).

This sequence belongs to the CDPS family.

It carries out the reaction 2 L-leucyl-tRNA(Leu) = cyclo(L-leucyl-L-leucyl) + 2 tRNA(Leu) + 2 H(+). In terms of biological role, it uses activated amino acids in the form of aminoacyl-tRNAs (aa-tRNAs) as substrates to catalyze the ATP-independent formation of cyclodipeptides which are intermediates in diketopiperazine (DKP) biosynthetic pathways. Catalyzes the formation of cyclo(L-Leu-L-Leu) (cLL) from L-leucyl-tRNA(Leu). Can incorporate various nonpolar residues, such as L-phenylalanine, L-leucine and L-methionine, into cyclodipeptides. This chain is Cyclo(L-leucyl-L-leucyl) synthase, found in Staphylococcus haemolyticus (strain JCSC1435).